The sequence spans 198 residues: MSTVDLARVGACILKHAVTGEAVELRSLWREHACVVAGLRRFGCVVCRWIAQDLSSLAGLLDQHGVRLVGVGPEALGLQEFLDGDYFAGELYLDESKQLYKELGFKRYNSLSILPAALGKPVRDVAAKAKAVGIQGNLSGDLLQSGGLLVVSKGGDKVLLHFVQKSPGDYVPKEHILQVLGISAEVCASDPPQCDREV.

A Phosphotyrosine modification is found at Y108.

The protein belongs to the peroxiredoxin-like PRXL2 family. Prostamide/prostaglandin F synthase subfamily.

Its subcellular location is the cytoplasm. The protein localises to the cytosol. It carries out the reaction prostaglandin H2 + [thioredoxin]-dithiol = prostaglandin F2alpha + [thioredoxin]-disulfide. It catalyses the reaction prostamide F2alpha + [thioredoxin]-disulfide = prostamide H2 + [thioredoxin]-dithiol. Functionally, catalyzes the reduction of prostaglandin-ethanolamide H(2) (prostamide H(2)) to prostamide F(2alpha) with NADPH as proton donor. Also able to reduce prostaglandin H(2) to prostaglandin F(2alpha). The sequence is that of Prostamide/prostaglandin F synthase from Homo sapiens (Human).